A 212-amino-acid chain; its full sequence is Octanoyltransferase (212 aa).

The region spanning alanine 31–isoleucine 209 is the BPL/LPL catalytic domain. Residues arginine 70–histidine 77, serine 138–glycine 140, and glycine 151–alanine 153 each bind substrate. Cysteine 169 acts as the Acyl-thioester intermediate in catalysis.

The protein belongs to the LipB family.

Its subcellular location is the cytoplasm. The enzyme catalyses octanoyl-[ACP] + L-lysyl-[protein] = N(6)-octanoyl-L-lysyl-[protein] + holo-[ACP] + H(+). It functions in the pathway protein modification; protein lipoylation via endogenous pathway; protein N(6)-(lipoyl)lysine from octanoyl-[acyl-carrier-protein]: step 1/2. Functionally, catalyzes the transfer of endogenously produced octanoic acid from octanoyl-acyl-carrier-protein onto the lipoyl domains of lipoate-dependent enzymes. Lipoyl-ACP can also act as a substrate although octanoyl-ACP is likely to be the physiological substrate. This Haemophilus influenzae (strain ATCC 51907 / DSM 11121 / KW20 / Rd) protein is Octanoyltransferase.